The sequence spans 1120 residues: TBC1 domain family member 8B (1120 aa).

GRAM domains are found at residues 145–212 (LKFE…EKTS) and 285–353 (EQFN…DKTN). One can recognise a Rab-GAP TBC domain in the interval 487 to 674 (GIPETLRGEL…NVVDCFFYDG (188 aa)). The EF-hand domain maps to 858 to 893 (NKDSLALWTFRLLDENSDCLINFKEFSSAIDIMYNG). The segment at 1035 to 1066 (SPTSSAKGFSGTVCGSGGPSEEKTGSHLEKDP) is disordered. The span at 1054 to 1066 (SEEKTGSHLEKDP) shows a compositional bias: basic and acidic residues.

Interacts (via domain Rab-GAP TBC) with RAB11B (in GTP-bound form). As to expression, kidney (at protein level).

It is found in the cytoplasm. The protein localises to the cytosol. Its function is as follows. Involved in vesicular recycling, probably as a RAB11B GTPase-activating protein. In Homo sapiens (Human), this protein is TBC1 domain family member 8B (TBC1D8B).